An 87-amino-acid polypeptide reads, in one-letter code: uncharacterized protein (87 aa).

This sequence belongs to the SF3B5 family.

This is an uncharacterized protein from Arabidopsis thaliana (Mouse-ear cress).